The sequence spans 1925 residues: Plexin-D1 (1925 aa).

Over residues 1 to 18 the composition is skewed to low complexity; that stretch reads MAPRAAGGAPLSARAAAA. Positions 1–23 are disordered; sequence MAPRAAGGAPLSARAAAASPPPF. Residues 1–46 form the signal peptide; the sequence is MAPRAAGGAPLSARAAAASPPPFQTPPRCPVPLLLLLLLGAARAGA. A Sema domain is found at 47–546; sequence LEIQRRFPSP…TSHQMARVKV (500 aa). Residues 47–1271 lie on the Extracellular side of the membrane; it reads LEIQRRFPSP…TLQLGGSETA (1225 aa). Asn86 carries N-linked (GlcNAc...) asparagine glycosylation. Intrachain disulfides connect Cys104-Cys114 and Cys140-Cys148. N-linked (GlcNAc...) asparagine glycans are attached at residues Asn155, Asn188, and Asn224. 2 cysteine pairs are disulfide-bonded: Cys322–Cys445 and Cys345–Cys389. 2 N-linked (GlcNAc...) asparagine glycosylation sites follow: Asn481 and Asn500. 5 disulfides stabilise this stretch: Cys549/Cys566, Cys555/Cys600, Cys558/Cys575, Cys569/Cys581, and Cys637/Cys661. Residue Asn583 is glycosylated (N-linked (GlcNAc...) asparagine). Residues Asn696, Asn736, Asn802, Asn965, Asn1017, Asn1060, Asn1099, Asn1118, Asn1132, Asn1237, and Asn1257 are each glycosylated (N-linked (GlcNAc...) asparagine). IPT/TIG domains are found at residues 891–979, 981–1066, and 1069–1160; these read PEIH…FSYV, PLVH…FWYM, and PVIT…LDPE. A helical transmembrane segment spans residues 1272–1292; the sequence is IIVSIVICSVLLLLSVVALFV. Topologically, residues 1293 to 1925 are cytoplasmic; the sequence is FCTKSRRAER…DNIYECYSEA (633 aa).

The protein belongs to the plexin family. As to quaternary structure, interacts with NRP1 and SEMA4A. Interacts with SH3BP1; they dissociate upon SEMA3E binding to PLXND1 allowing SH3BP1 to transduce downstream signal through RAC1 inactivation. In terms of tissue distribution, detected at low levels in heart, placenta, lung, skeletal muscle, kidney, thymus and liver. Detected at very low levels in brain, colon, spleen, small intestine and peripheral blood leukocytes.

The protein resides in the cell membrane. Its subcellular location is the cell projection. The protein localises to the lamellipodium membrane. Its function is as follows. Cell surface receptor for SEMA4A and for class 3 semaphorins, such as SEMA3A, SEMA3C and SEMA3E. Plays an important role in cell-cell signaling, and in regulating the migration of a wide spectrum of cell types. Regulates the migration of thymocytes in the medulla. Regulates endothelial cell migration. Plays an important role in ensuring the specificity of synapse formation. Required for normal development of the heart and vasculature. Mediates anti-angiogenic signaling in response to SEMA3E. The sequence is that of Plexin-D1 (PLXND1) from Homo sapiens (Human).